The sequence spans 117 residues: UPF0342 protein OB1136 (117 aa).

This sequence belongs to the UPF0342 family.

This is UPF0342 protein OB1136 from Oceanobacillus iheyensis (strain DSM 14371 / CIP 107618 / JCM 11309 / KCTC 3954 / HTE831).